Consider the following 882-residue polypeptide: Alanine--tRNA ligase (882 aa).

Zn(2+) contacts are provided by histidine 568, histidine 572, cysteine 670, and histidine 674.

It belongs to the class-II aminoacyl-tRNA synthetase family. Zn(2+) serves as cofactor.

It localises to the cytoplasm. The enzyme catalyses tRNA(Ala) + L-alanine + ATP = L-alanyl-tRNA(Ala) + AMP + diphosphate. Catalyzes the attachment of alanine to tRNA(Ala) in a two-step reaction: alanine is first activated by ATP to form Ala-AMP and then transferred to the acceptor end of tRNA(Ala). Also edits incorrectly charged Ser-tRNA(Ala) and Gly-tRNA(Ala) via its editing domain. This is Alanine--tRNA ligase from Lactobacillus johnsonii (strain CNCM I-12250 / La1 / NCC 533).